The sequence spans 636 residues: Tumor protein p73 (636 aa).

A transactivation region spans residues 1 to 46 (MAQSTATSPDGGTTFEHLWSSLEPDSTYFDLPQSSRGNNEVVGGTD). Threonine 27 is modified (phosphothreonine; by PLK1). Tyrosine 28 bears the Phosphotyrosine; by SRC and HCK mark. Residues 78–104 (RAASASPYTPEHAASVPTHSPYAQPSS) form a disordered region. A compositionally biased stretch (polar residues) spans 94 to 104 (PTHSPYAQPSS). Tyrosine 99 bears the Phosphotyrosine; by ABL1 mark. The tract at residues 131-310 (FQQSSTAKSA…DRKADEDHYR (180 aa)) is DNA-binding. Residues cysteine 194, histidine 197, cysteine 258, and cysteine 262 each coordinate Zn(2+). A disordered region spans residues 314-345 (ALNESSAKNGAASKRAFKQSPPAVPALGAGVK). Residues 345-380 (KKRRHGDEDTYYLQVRGRENFEILMKLKESLELMEL) form an interaction with HIPK2 region. The tract at residues 345–386 (KKRRHGDEDTYYLQVRGRENFEILMKLKESLELMELVPQPLV) is oligomerization. Residues 483–487 (PPPPY) carry the PPxY motif motif. The region spanning 485 to 551 (PPYHADPSLV…WRGLQDLKQG (67 aa)) is the SAM domain. A Glycyl lysine isopeptide (Lys-Gly) (interchain with G-Cter in SUMO); in isoform Alpha cross-link involves residue lysine 627. Lysine 627 participates in a covalent cross-link: Glycyl lysine isopeptide (Lys-Gly) (interchain with G-Cter in SUMO2).

Belongs to the p53 family. Found in a complex with p53/TP53 and CABLES1. The C-terminal oligomerization domain binds to the ABL1 tyrosine kinase SH3 domain. Interacts with HECW2. Isoform Beta interacts homotypically and with p53/TP53, whereas isoform Alpha does not. Isoform Gamma interacts homotypically and with all p73 isoforms. Isoform Delta interacts with isoform Gamma, isoform Alpha, and homotypically. Isoforms Alpha and Beta interact with HIPK2. Isoform Alpha interacts with RANBP9. Isoform Beta interacts with WWOX. Interacts (via SAM domain) with FBXO45 (via B30.2/SPRY domain). Interacts with YAP1 (phosphorylated form). Interacts with HCK (via SH3 domain); this inhibits TP73 activity and degradation. Interacts (via SAM domain) with NQO1; this interaction is NADH-dependent, stabilizes TP73 in response to oxidative stress and protects it from ubiquitin-independent degradation by the 20S proteasome. As to quaternary structure, (Microbial infection) Interacts with Epstein-Barr virus protein EBNA6; this interaction inhibits TP73-mediated apoptotic pathway. It depends on Zn(2+) as a cofactor. Isoform alpha (but not isoform beta) is sumoylated on Lys-627, which potentiates proteasomal degradation but does not affect transcriptional activity. Phosphorylation by PLK1 and PLK3 inhibits the transcription regulator activity and pro-apoptotic function. Post-translationally, higher levels of phosphorylation seen in the brain from patients with Huntington disease. In terms of processing, polyubiquitinated by RCHY1/PIRH2; leading to its degradation by the proteasome. As to expression, expressed in striatal neurons of patients with Huntington disease (at protein level). Brain, kidney, placenta, colon, heart, liver, spleen, skeletal muscle, prostate, thymus and pancreas. Highly expressed in fetal tissue. Expressed in the respiratory epithelium.

It localises to the nucleus. Its subcellular location is the cytoplasm. In terms of biological role, participates in the apoptotic response to DNA damage. Isoforms containing the transactivation domain are pro-apoptotic, isoforms lacking the domain are anti-apoptotic and block the function of p53 and transactivating p73 isoforms. May be a tumor suppressor protein. Is an activator of FOXJ1 expression. It is an essential factor for the positive regulation of lung ciliated cell differentiation. This Homo sapiens (Human) protein is Tumor protein p73 (TP73).